A 393-amino-acid chain; its full sequence is NAD(P)H-quinone oxidoreductase subunit H, chloroplastic (393 aa).

It belongs to the complex I 49 kDa subunit family. As to quaternary structure, NDH is composed of at least 16 different subunits, 5 of which are encoded in the nucleus.

It is found in the plastid. The protein localises to the chloroplast thylakoid membrane. It catalyses the reaction a plastoquinone + NADH + (n+1) H(+)(in) = a plastoquinol + NAD(+) + n H(+)(out). The catalysed reaction is a plastoquinone + NADPH + (n+1) H(+)(in) = a plastoquinol + NADP(+) + n H(+)(out). NDH shuttles electrons from NAD(P)H:plastoquinone, via FMN and iron-sulfur (Fe-S) centers, to quinones in the photosynthetic chain and possibly in a chloroplast respiratory chain. The immediate electron acceptor for the enzyme in this species is believed to be plastoquinone. Couples the redox reaction to proton translocation, and thus conserves the redox energy in a proton gradient. This chain is NAD(P)H-quinone oxidoreductase subunit H, chloroplastic, found in Cucumis sativus (Cucumber).